The primary structure comprises 473 residues: uncharacterized protein (473 aa).

Residues 1–86 (MSSSPTESEI…NTSNYGSSRD (86 aa)) form a disordered region. Residues 10–19 (ILPKESHNSI) show a composition bias toward basic and acidic residues. 2 stretches are compositionally biased toward polar residues: residues 20–39 (DEQSQQPANTDTLVKDNSFN) and 55–68 (EPVQSQDPISPNMA). Ser-64 is subject to Phosphoserine. Residues 69–83 (SNESGNSENTSNYGS) show a composition bias toward low complexity. 3 consecutive RRM domains span residues 95–165 (LWMG…NHLF), 188–260 (IFVG…PIRV), and 305–370 (VFVG…RIRL). A disordered region spans residues 448–473 (MHIPENGNSDTMPVPNTQGKHLSAEE). The segment covering 453–467 (NGNSDTMPVPNTQGK) has biased composition (polar residues).

This is an uncharacterized protein from Schizosaccharomyces pombe (strain 972 / ATCC 24843) (Fission yeast).